A 434-amino-acid polypeptide reads, in one-letter code: Alpha-enolase (434 aa).

N-acetylserine is present on Ser2. Lys5 carries the N6-acetyllysine modification. Phosphoserine is present on Ser27. Residue Ser40 coordinates Mg(2+). Residue Tyr44 is modified to Phosphotyrosine. Lys60 bears the N6-acetyllysine; alternate mark. Lys60 bears the N6-succinyllysine; alternate mark. 2 positions are modified to N6-acetyllysine: Lys64 and Lys71. Residue Lys89 is modified to N6-acetyllysine; alternate. The residue at position 89 (Lys89) is an N6-succinyllysine; alternate. An N6-acetyllysine mark is found at Lys92 and Lys126. Substrate contacts are provided by His158 and Glu167. N6-acetyllysine is present on residues Lys193 and Lys199. At Lys202 the chain carries N6-acetyllysine; alternate. Lys202 participates in a covalent cross-link: Glycyl lysine isopeptide (Lys-Gly) (interchain with G-Cter in SUMO2); alternate. The active-site Proton donor is the Glu210. An N6-acetyllysine; alternate mark is found at Lys228 and Lys233. At Lys228 the chain carries N6-succinyllysine; alternate. Lys228 is subject to N6-(2-hydroxyisobutyryl)lysine; alternate. An N6-malonyllysine; alternate modification is found at Lys233. Asp245 is a binding site for Mg(2+). Position 254 is a phosphoserine (Ser254). Position 256 is an N6-acetyllysine (Lys256). A phosphoserine mark is found at Ser263 and Ser272. Lys281 bears the N6-acetyllysine; alternate mark. Position 281 is an N6-(2-hydroxyisobutyryl)lysine; alternate (Lys281). An N6-acetyllysine modification is found at Lys285. Residue Tyr287 is modified to Phosphotyrosine. Ser291 is subject to Phosphoserine. Mg(2+) is bound by residues Glu293 and Asp318. Substrate-binding residues include Glu293 and Asp318. An N6-acetyllysine mark is found at Lys335 and Lys343. The active-site Proton acceptor is the Lys343. Substrate-binding positions include 370–373 (SHRS) and Lys394. A required for interaction with PLG region spans residues 405-434 (AKYNQLLRIEEELGSKAKFAGRNFRNPLAK). Lys406 carries the N6-acetyllysine modification. Position 420 is an N6-acetyllysine; alternate (Lys420). Lys420 is modified (N6-succinyllysine; alternate). Lys420 bears the N6-malonyllysine; alternate mark.

This sequence belongs to the enolase family. In terms of assembly, mammalian enolase is composed of 3 isozyme subunits, alpha, beta and gamma, which can form homodimers or heterodimers which are cell-type and development-specific. ENO1 interacts with PLG in the neuronal plasma membrane and promotes its activation. The C-terminal lysine is required for this binding. Interacts with ENO4 and PGAM2. Interacts with CMTM6. Requires Mg(2+) as cofactor. Post-translationally, ISGylated. Lysine 2-hydroxyisobutyrylation (Khib) by p300/EP300 activates the phosphopyruvate hydratase activity.

Its subcellular location is the cytoplasm. It is found in the cell membrane. It carries out the reaction (2R)-2-phosphoglycerate = phosphoenolpyruvate + H2O. Its pathway is carbohydrate degradation; glycolysis; pyruvate from D-glyceraldehyde 3-phosphate: step 4/5. Glycolytic enzyme the catalyzes the conversion of 2-phosphoglycerate to phosphoenolpyruvate. In addition to glycolysis, involved in various processes such as growth control, hypoxia tolerance and allergic responses. May also function in the intravascular and pericellular fibrinolytic system due to its ability to serve as a receptor and activator of plasminogen on the cell surface of several cell-types such as leukocytes and neurons. Stimulates immunoglobulin production. The chain is Alpha-enolase (ENO1) from Pongo abelii (Sumatran orangutan).